Reading from the N-terminus, the 96-residue chain is Aspartyl/glutamyl-tRNA(Asn/Gln) amidotransferase subunit C (96 aa).

Belongs to the GatC family. In terms of assembly, heterotrimer of A, B and C subunits.

It carries out the reaction L-glutamyl-tRNA(Gln) + L-glutamine + ATP + H2O = L-glutaminyl-tRNA(Gln) + L-glutamate + ADP + phosphate + H(+). The enzyme catalyses L-aspartyl-tRNA(Asn) + L-glutamine + ATP + H2O = L-asparaginyl-tRNA(Asn) + L-glutamate + ADP + phosphate + 2 H(+). Its function is as follows. Allows the formation of correctly charged Asn-tRNA(Asn) or Gln-tRNA(Gln) through the transamidation of misacylated Asp-tRNA(Asn) or Glu-tRNA(Gln) in organisms which lack either or both of asparaginyl-tRNA or glutaminyl-tRNA synthetases. The reaction takes place in the presence of glutamine and ATP through an activated phospho-Asp-tRNA(Asn) or phospho-Glu-tRNA(Gln). The sequence is that of Aspartyl/glutamyl-tRNA(Asn/Gln) amidotransferase subunit C from Geobacillus kaustophilus (strain HTA426).